Here is a 120-residue protein sequence, read N- to C-terminus: MGLFSFPKEEKLRKQEDFLRVLREGRPYSLSKSFIIYIRKGAEKRRIGISVNKKVGKAVVRNRIKRLIREVYRLHRPYLREDIEMLVIVKPGENIKDLDFHKVKDMLIKIWEKAGALKEQ.

The protein belongs to the RnpA family. As to quaternary structure, consists of a catalytic RNA component (M1 or rnpB) and a protein subunit.

The enzyme catalyses Endonucleolytic cleavage of RNA, removing 5'-extranucleotides from tRNA precursor.. RNaseP catalyzes the removal of the 5'-leader sequence from pre-tRNA to produce the mature 5'-terminus. It can also cleave other RNA substrates such as 4.5S RNA. The protein component plays an auxiliary but essential role in vivo by binding to the 5'-leader sequence and broadening the substrate specificity of the ribozyme. The polypeptide is Ribonuclease P protein component (Dictyoglomus thermophilum (strain ATCC 35947 / DSM 3960 / H-6-12)).